The sequence spans 482 residues: Aspartyl/glutamyl-tRNA(Asn/Gln) amidotransferase subunit B (482 aa).

It belongs to the GatB/GatE family. GatB subfamily. As to quaternary structure, heterotrimer of A, B and C subunits.

It carries out the reaction L-glutamyl-tRNA(Gln) + L-glutamine + ATP + H2O = L-glutaminyl-tRNA(Gln) + L-glutamate + ADP + phosphate + H(+). The enzyme catalyses L-aspartyl-tRNA(Asn) + L-glutamine + ATP + H2O = L-asparaginyl-tRNA(Asn) + L-glutamate + ADP + phosphate + 2 H(+). Its function is as follows. Allows the formation of correctly charged Asn-tRNA(Asn) or Gln-tRNA(Gln) through the transamidation of misacylated Asp-tRNA(Asn) or Glu-tRNA(Gln) in organisms which lack either or both of asparaginyl-tRNA or glutaminyl-tRNA synthetases. The reaction takes place in the presence of glutamine and ATP through an activated phospho-Asp-tRNA(Asn) or phospho-Glu-tRNA(Gln). The sequence is that of Aspartyl/glutamyl-tRNA(Asn/Gln) amidotransferase subunit B from Ehrlichia canis (strain Jake).